The primary structure comprises 101 residues: Urease subunit beta (101 aa).

The protein belongs to the urease beta subunit family. In terms of assembly, heterotrimer of UreA (gamma), UreB (beta) and UreC (alpha) subunits. Three heterotrimers associate to form the active enzyme.

It is found in the cytoplasm. It carries out the reaction urea + 2 H2O + H(+) = hydrogencarbonate + 2 NH4(+). It participates in nitrogen metabolism; urea degradation; CO(2) and NH(3) from urea (urease route): step 1/1. The sequence is that of Urease subunit beta from Burkholderia thailandensis (strain ATCC 700388 / DSM 13276 / CCUG 48851 / CIP 106301 / E264).